The sequence spans 473 residues: Siroheme synthase 1 (473 aa).

The segment at 1–204 is precorrin-2 dehydrogenase /sirohydrochlorin ferrochelatase; that stretch reads MDYFPIFCQL…NDHVQADQHV (204 aa). NAD(+) contacts are provided by residues 22 to 23 and 43 to 44; these read EI and CE. Ser-128 is modified (phosphoserine). The interval 216-473 is uroporphyrinogen-III C-methyltransferase; the sequence is GEVVLVGAGP…KVTECVAHVG (258 aa). Residue Pro-225 coordinates S-adenosyl-L-methionine. Asp-248 serves as the catalytic Proton acceptor. Residue Lys-270 is the Proton donor of the active site. S-adenosyl-L-methionine contacts are provided by residues 301-303, Ile-306, 331-332, Met-382, and Gly-411; these read GGD and TA.

It in the N-terminal section; belongs to the precorrin-2 dehydrogenase / sirohydrochlorin ferrochelatase family. In the C-terminal section; belongs to the precorrin methyltransferase family.

It catalyses the reaction uroporphyrinogen III + 2 S-adenosyl-L-methionine = precorrin-2 + 2 S-adenosyl-L-homocysteine + H(+). The catalysed reaction is precorrin-2 + NAD(+) = sirohydrochlorin + NADH + 2 H(+). It carries out the reaction siroheme + 2 H(+) = sirohydrochlorin + Fe(2+). It functions in the pathway cofactor biosynthesis; adenosylcobalamin biosynthesis; precorrin-2 from uroporphyrinogen III: step 1/1. It participates in cofactor biosynthesis; adenosylcobalamin biosynthesis; sirohydrochlorin from precorrin-2: step 1/1. The protein operates within porphyrin-containing compound metabolism; siroheme biosynthesis; precorrin-2 from uroporphyrinogen III: step 1/1. Its pathway is porphyrin-containing compound metabolism; siroheme biosynthesis; siroheme from sirohydrochlorin: step 1/1. It functions in the pathway porphyrin-containing compound metabolism; siroheme biosynthesis; sirohydrochlorin from precorrin-2: step 1/1. Its function is as follows. Multifunctional enzyme that catalyzes the SAM-dependent methylations of uroporphyrinogen III at position C-2 and C-7 to form precorrin-2 via precorrin-1. Then it catalyzes the NAD-dependent ring dehydrogenation of precorrin-2 to yield sirohydrochlorin. Finally, it catalyzes the ferrochelation of sirohydrochlorin to yield siroheme. The protein is Siroheme synthase 1 of Yersinia pestis (strain Pestoides F).